Consider the following 104-residue polypeptide: COX assembly mitochondrial protein 1 (104 aa).

Residues 10–52 (QKQCADLIRALEECHKSFGKFFGECNTIKYELKACLTKDRNDK) form the CHCH domain. 2 short sequence motifs (cx9C motif) span residues 13 to 23 (CADLIRALEEC) and 34 to 44 (CNTIKYELKAC). Cystine bridges form between Cys13-Cys44 and Cys23-Cys34.

It belongs to the CMC family.

Its subcellular location is the mitochondrion inner membrane. Its function is as follows. Required for mitochondrial cytochrome c oxidase (COX) assembly and respiration. The sequence is that of COX assembly mitochondrial protein 1 (cmc1) from Schizosaccharomyces pombe (strain 972 / ATCC 24843) (Fission yeast).